A 310-amino-acid chain; its full sequence is Prohibitin-2 (310 aa).

A helical; Signal-anchor for type II membrane protein transmembrane segment spans residues Phe-38 to Leu-58. The tract at residues Asp-130 to Asp-144 is interaction with ATG8. The AIM signature appears at Tyr-138 to Leu-141. Positions Asn-212–Glu-253 form a coiled coil.

The protein belongs to the prohibitin family. As to quaternary structure, the mitochondrial prohibitin complex consists of two subunits (PHB1 and PHB2). The subunits assemble into a membrane-associated ring-shaped supercomplex of approximately 1 mDa. The mitochondrial prohibitin complex interacts with the m-AAA protease, a heterohexamer composed of YTA12/RCA1 and YTA10/AFG3. The mitochondrial prohibitin complex interacts with ATG8 and the interaction may support mitophagosome assembly. In terms of processing, the N-terminus is blocked.

The protein resides in the mitochondrion inner membrane. Functionally, prohibitin probably acts as a holdase/unfoldase for the stabilization of newly synthesized mitochondrial proteins. Involved in mitophagy; may act as an adapter for ATG8 that supports mitophagosome assembly. Negatively regulates the proteolytic processing of ATG32 via the i-AAA protease. Acts as a negative regulator of the m-AAA protease. In Saccharomyces cerevisiae (strain ATCC 204508 / S288c) (Baker's yeast), this protein is Prohibitin-2 (PHB2).